The following is a 181-amino-acid chain: 28 kDa heat- and acid-stable phosphoprotein (181 aa).

Residues 1–14 are compositionally biased toward basic residues; the sequence is MPKGGRKGGHKGRA. The interval 1–117 is disordered; that stretch reads MPKGGRKGGH…SRREREEIEK (117 aa). A Phosphothreonine modification is found at T18. Residue S19 is modified to Phosphoserine. A compositionally biased stretch (basic and acidic residues) spans 30-59; sequence EKQKAREEEEQKEGGDGAAGDPKKEKKSLD. Residue K52 forms a Glycyl lysine isopeptide (Lys-Gly) (interchain with G-Cter in SUMO2) linkage. 3 positions are modified to phosphoserine: S57, S60, and S63. Acidic residues predominate over residues 60 to 69; the sequence is SDESEDEEDD. At Y70 the chain carries Phosphotyrosine. Residues 102–117 are compositionally biased toward basic and acidic residues; that stretch reads DGPKELSRREREEIEK. K126 carries the N6-methyllysine modification. N6-acetyllysine occurs at positions 132 and 164. Over residues 151 to 167 the composition is skewed to basic and acidic residues; it reads EEAARKKEEERKAKDDA. Residues 151–181 are disordered; it reads EEAARKKEEERKAKDDATLSGKRMQSLSLNK. Phosphoserine is present on residues S176 and S178.

It belongs to the PDAP1 family.

In terms of biological role, enhances PDGFA-stimulated cell growth in fibroblasts, but inhibits the mitogenic effect of PDGFB. This is 28 kDa heat- and acid-stable phosphoprotein (PDAP1) from Homo sapiens (Human).